We begin with the raw amino-acid sequence, 191 residues long: Lipid A acyltransferase PagP (191 aa).

The first 23 residues, 1 to 23 (MRLFYQRISLLISLCGFFSAAWA), serve as a signal peptide directing secretion. Residues His62, Asp105, and Ser106 contribute to the active site.

Belongs to the lipid A palmitoyltransferase family. In terms of assembly, homodimer.

Its subcellular location is the cell outer membrane. The catalysed reaction is a lipid A + a 1,2-diacyl-sn-glycero-3-phosphocholine = a hepta-acyl lipid A + a 2-acyl-sn-glycero-3-phosphocholine. It catalyses the reaction a lipid IVA + a 1,2-diacyl-sn-glycero-3-phosphocholine = a lipid IVB + a 2-acyl-sn-glycero-3-phosphocholine. The enzyme catalyses a lipid IIA + a 1,2-diacyl-sn-glycero-3-phosphocholine = a lipid IIB + a 2-acyl-sn-glycero-3-phosphocholine. Functionally, transfers a fatty acid residue from the sn-1 position of a phospholipid to the N-linked hydroxyfatty acid chain on the proximal unit of lipid A or its precursors. The sequence is that of Lipid A acyltransferase PagP from Sodalis glossinidius (strain morsitans).